The chain runs to 282 residues: Elongation factor Ts (282 aa).

The interval T80–V83 is involved in Mg(2+) ion dislocation from EF-Tu.

The protein belongs to the EF-Ts family.

Its subcellular location is the cytoplasm. In terms of biological role, associates with the EF-Tu.GDP complex and induces the exchange of GDP to GTP. It remains bound to the aminoacyl-tRNA.EF-Tu.GTP complex up to the GTP hydrolysis stage on the ribosome. The polypeptide is Elongation factor Ts (tsf) (Chlamydia pneumoniae (Chlamydophila pneumoniae)).